Here is a 529-residue protein sequence, read N- to C-terminus: Probable serine/threonine protein phosphatase 2A regulatory subunit B''epsilon (529 aa).

The tract at residues 60-110 (KSGTPTNKSKNLPSVFLSSSTPPLSPRSSSGSPRFSRQRTSPPSLHSPLRS) is disordered. Residues 71–109 (LPSVFLSSSTPPLSPRSSSGSPRFSRQRTSPPSLHSPLR) show a composition bias toward low complexity. The EF-hand domain maps to 381–416 (SSEPSLEYWFKCVDLDGNGVITSNEMQFFFEEQLHR). Ca(2+) is bound by residues D394, D396, N398, and E405. The disordered stretch occupies residues 507–529 (EEDVDEVSNGSADVWDEPLEPPF). Over residues 520–529 (VWDEPLEPPF) the composition is skewed to acidic residues.

As to quaternary structure, PP2A consists of a common heterodimeric core enzyme, composed of a 36 kDa catalytic subunit (subunit C) and a 65 kDa constant regulatory subunit (PR65 or subunit A), that associates with a variety of regulatory subunits. Proteins that associate with the core dimer include three families of regulatory subunits B (the R2/B/PR55/B55, R3/B''/PR72/PR130/PR59 and R5/B'/B56 families) and cell signaling molecules.

In terms of biological role, probable regulatory subunit of type 2A protein phosphatase. The protein is Probable serine/threonine protein phosphatase 2A regulatory subunit B''epsilon (B''EPSILON) of Arabidopsis thaliana (Mouse-ear cress).